The primary structure comprises 310 residues: Dermonecrotic toxin LiSicTox-alphaII2 (310 aa).

An N-terminal signal peptide occupies residues 1 to 18; it reads MLLRIALILGCWSILSEG. The propeptide occupies 19 to 26; the sequence is AENDIAER. Residue histidine 38 is part of the active site. Mg(2+) contacts are provided by glutamate 58 and aspartate 60. The active-site Nucleophile is the histidine 74. 2 cysteine pairs are disulfide-bonded: cysteine 78–cysteine 84 and cysteine 80–cysteine 224. An N-linked (GlcNAc...) asparagine glycan is attached at asparagine 99. Aspartate 118 contributes to the Mg(2+) binding site.

The protein belongs to the arthropod phospholipase D family. Class II subfamily. Requires Mg(2+) as cofactor. As to expression, expressed by the venom gland.

Its subcellular location is the secreted. It carries out the reaction an N-(acyl)-sphingosylphosphocholine = an N-(acyl)-sphingosyl-1,3-cyclic phosphate + choline. The catalysed reaction is an N-(acyl)-sphingosylphosphoethanolamine = an N-(acyl)-sphingosyl-1,3-cyclic phosphate + ethanolamine. The enzyme catalyses a 1-acyl-sn-glycero-3-phosphocholine = a 1-acyl-sn-glycero-2,3-cyclic phosphate + choline. It catalyses the reaction a 1-acyl-sn-glycero-3-phosphoethanolamine = a 1-acyl-sn-glycero-2,3-cyclic phosphate + ethanolamine. In terms of biological role, dermonecrotic toxins cleave the phosphodiester linkage between the phosphate and headgroup of certain phospholipids (sphingolipid and lysolipid substrates), forming an alcohol (often choline) and a cyclic phosphate. This toxin acts on sphingomyelin (SM). It may also act on ceramide phosphoethanolamine (CPE), lysophosphatidylcholine (LPC) and lysophosphatidylethanolamine (LPE), but not on lysophosphatidylserine (LPS), and lysophosphatidylglycerol (LPG). It acts by transphosphatidylation, releasing exclusively cyclic phosphate products as second products. Induces dermonecrosis, hemolysis, increased vascular permeability, edema, inflammatory response, and platelet aggregation. This chain is Dermonecrotic toxin LiSicTox-alphaII2, found in Loxosceles intermedia (Brown spider).